The chain runs to 91 residues: Probable translocation protein y4yM (91 aa).

2 consecutive transmembrane segments (helical) span residues 15 to 35 (VVFMIWILPPLIASVIVGLTI) and 55 to 75 (LLVVVAVIGLFAPVLSAPLIE).

Belongs to the FliQ/MopD/SpaQ family.

Its subcellular location is the cell membrane. Its function is as follows. Could be involved in the secretion of an unknown factor. The protein is Probable translocation protein y4yM of Sinorhizobium fredii (strain NBRC 101917 / NGR234).